Consider the following 1370-residue polypeptide: DNA-directed RNA polymerase subunit beta (1370 aa).

It belongs to the RNA polymerase beta chain family. As to quaternary structure, the RNAP catalytic core consists of 2 alpha, 1 beta, 1 beta' and 1 omega subunit. When a sigma factor is associated with the core the holoenzyme is formed, which can initiate transcription.

It carries out the reaction RNA(n) + a ribonucleoside 5'-triphosphate = RNA(n+1) + diphosphate. In terms of biological role, DNA-dependent RNA polymerase catalyzes the transcription of DNA into RNA using the four ribonucleoside triphosphates as substrates. The polypeptide is DNA-directed RNA polymerase subunit beta (Geobacter sulfurreducens (strain ATCC 51573 / DSM 12127 / PCA)).